The following is a 300-amino-acid chain: Cation-efflux pump FieF (300 aa).

4 helical membrane passes run 11-31 (LAAV…VFAW), 40-60 (LASL…LLVV), 81-101 (LAAL…ILTG), and 114-134 (PEVG…LVSF). Residues Asp45 and Asp49 each coordinate Zn(2+). Residues His153 and Asp157 each coordinate Zn(2+). 2 consecutive transmembrane segments (helical) span residues 156–176 (SDLL…KGIT) and 182–202 (FALG…YDAV).

It belongs to the cation diffusion facilitator (CDF) transporter (TC 2.A.4) family. FieF subfamily. Homodimer.

Its subcellular location is the cell inner membrane. The catalysed reaction is Zn(2+)(in) + H(+)(out) = Zn(2+)(out) + H(+)(in). It catalyses the reaction Cd(2+)(in) + H(+)(out) = Cd(2+)(out) + H(+)(in). The enzyme catalyses Fe(2+)(in) + H(+)(out) = Fe(2+)(out) + H(+)(in). Its function is as follows. Divalent metal cation transporter which exports Zn(2+), Cd(2+) and possibly Fe(2+). May be involved in zinc and iron detoxification by efflux. The protein is Cation-efflux pump FieF of Pectobacterium carotovorum subsp. carotovorum (strain PC1).